The chain runs to 440 residues: MASSSKALIESIGSLDKDSYVSLLSKLIGESKFVQNNPPELIPQEDLIVKHVLDSLRPYSTETGGGPLVINHVAYHSGRGNLIVEYPGSVPGKILSFVGMHMDVVTANPDDWEFDPFSLSIDGDKLRGRGTTDCLGHVALVTELMKKLGQAKPALKSTVVAVFIASEENSSIPGVGVDMLVKDKLLDKLKSGPLYWIDTADKQPCVGTGGMIPWKLQFTGKLFHSGLAHKAINAMELAMEGLKEIQARFYRDFPPHPQEEVYGFATPSTMKPTQWCYPAGGINQIPGECTVSGDVRLTPFYDVKEVITKLQEYVDDINGNIERLETRGPVSKYVLPDENLRGRLTLSFDEASAGVACNLDSPGFHVLCKATEEVVGHVKPYSITGTLPLIRDLQDEGFDVQTSGYGLMATYHAKNEYCLLTDMCQGFDVFIRIISQLEQV.

His101 contacts Zn(2+). Asp103 is an active-site residue. Asp133 lines the Zn(2+) pocket. The active-site Proton acceptor is the Glu167. Zn(2+) is bound by residues Glu168 and His412.

This sequence belongs to the peptidase M20A family. ArgE subfamily. In terms of assembly, homodimer. It depends on Zn(2+) as a cofactor. The cofactor is Co(2+).

The catalysed reaction is N(2)-acetyl-L-ornithine + H2O = L-ornithine + acetate. The protein operates within amino-acid biosynthesis; L-arginine biosynthesis; L-ornithine from N(2)-acetyl-L-ornithine (linear): step 1/1. The chain is Acetylornithine deacetylase from Arabidopsis thaliana (Mouse-ear cress).